A 255-amino-acid polypeptide reads, in one-letter code: Cell division protein ZapD (255 aa).

It belongs to the ZapD family. Interacts with FtsZ.

The protein resides in the cytoplasm. Cell division factor that enhances FtsZ-ring assembly. Directly interacts with FtsZ and promotes bundling of FtsZ protofilaments, with a reduction in FtsZ GTPase activity. The protein is Cell division protein ZapD of Methylococcus capsulatus (strain ATCC 33009 / NCIMB 11132 / Bath).